The chain runs to 555 residues: Arginine--tRNA ligase (555 aa).

The 'HIGH' region motif lies at 117–127 (ANPNGPLHVGH).

Belongs to the class-I aminoacyl-tRNA synthetase family.

It is found in the cytoplasm. The enzyme catalyses tRNA(Arg) + L-arginine + ATP = L-arginyl-tRNA(Arg) + AMP + diphosphate. The protein is Arginine--tRNA ligase of Methanospirillum hungatei JF-1 (strain ATCC 27890 / DSM 864 / NBRC 100397 / JF-1).